Consider the following 107-residue polypeptide: Small ribosomal subunit protein uS10c (107 aa).

Belongs to the universal ribosomal protein uS10 family. As to quaternary structure, part of the 30S ribosomal subunit.

Its subcellular location is the plastid. The protein localises to the chloroplast. Involved in the binding of tRNA to the ribosomes. This chain is Small ribosomal subunit protein uS10c, found in Phaeodactylum tricornutum (strain CCAP 1055/1).